The primary structure comprises 211 residues: Protein-L-isoaspartate O-methyltransferase (211 aa).

Ser62 is an active-site residue.

This sequence belongs to the methyltransferase superfamily. L-isoaspartyl/D-aspartyl protein methyltransferase family.

Its subcellular location is the cytoplasm. The enzyme catalyses [protein]-L-isoaspartate + S-adenosyl-L-methionine = [protein]-L-isoaspartate alpha-methyl ester + S-adenosyl-L-homocysteine. Functionally, catalyzes the methyl esterification of L-isoaspartyl residues in peptides and proteins that result from spontaneous decomposition of normal L-aspartyl and L-asparaginyl residues. It plays a role in the repair and/or degradation of damaged proteins. The protein is Protein-L-isoaspartate O-methyltransferase of Shewanella denitrificans (strain OS217 / ATCC BAA-1090 / DSM 15013).